A 216-amino-acid polypeptide reads, in one-letter code: Pyrrolidone-carboxylate peptidase (216 aa).

Active-site residues include glutamate 80, cysteine 143, and histidine 168.

The protein belongs to the peptidase C15 family. Homotetramer.

It localises to the cytoplasm. The catalysed reaction is Release of an N-terminal pyroglutamyl group from a polypeptide, the second amino acid generally not being Pro.. Its function is as follows. Removes 5-oxoproline from various penultimate amino acid residues except L-proline. The protein is Pyrrolidone-carboxylate peptidase of Cupriavidus pinatubonensis (strain JMP 134 / LMG 1197) (Cupriavidus necator (strain JMP 134)).